A 214-amino-acid chain; its full sequence is Pyridoxine/pyridoxamine 5'-phosphate oxidase (214 aa).

Substrate is bound by residues 8-11 (RINY) and Lys66. FMN contacts are provided by residues 61–66 (RILLIK), 76–77 (FT), Arg82, Lys83, and Gln105. Residues Tyr123, Arg127, and Ser131 each contribute to the substrate site. FMN is bound by residues 140–141 (QS) and Trp184. 190–192 (RLH) serves as a coordination point for substrate. An FMN-binding site is contributed by Arg194.

Belongs to the pyridoxamine 5'-phosphate oxidase family. As to quaternary structure, homodimer. Requires FMN as cofactor.

The enzyme catalyses pyridoxamine 5'-phosphate + O2 + H2O = pyridoxal 5'-phosphate + H2O2 + NH4(+). It catalyses the reaction pyridoxine 5'-phosphate + O2 = pyridoxal 5'-phosphate + H2O2. Its pathway is cofactor metabolism; pyridoxal 5'-phosphate salvage; pyridoxal 5'-phosphate from pyridoxamine 5'-phosphate: step 1/1. The protein operates within cofactor metabolism; pyridoxal 5'-phosphate salvage; pyridoxal 5'-phosphate from pyridoxine 5'-phosphate: step 1/1. Functionally, catalyzes the oxidation of either pyridoxine 5'-phosphate (PNP) or pyridoxamine 5'-phosphate (PMP) into pyridoxal 5'-phosphate (PLP). In Burkholderia vietnamiensis (strain G4 / LMG 22486) (Burkholderia cepacia (strain R1808)), this protein is Pyridoxine/pyridoxamine 5'-phosphate oxidase.